The primary structure comprises 293 residues: MAAGKEIRGKIKSVENTKKITKAMEMVAASKMRKAQERMRAARPYADKIRNITANLSRATPEYHHPFVVKNSGSGVVGMIIVTTDKGLCGGMNTNVLRLVTNKMRELDAAGTKVQAVAIGNKGLGFLNRIGAKVVSQATQLGDTPHLDKLIGPVKVLLDLYAEGKLDAVYICYTRFLNTMKQEPQVEQLLPLSDERLSQSAAEQQSHGWDYIYEPDAQAVIDNLMVRYAEALIYQSVAENMASEQSARMVAMKAATDNAGSLIGELKLVYNKTRQAAITKELSEIVSGAAAVG.

Belongs to the ATPase gamma chain family. F-type ATPases have 2 components, CF(1) - the catalytic core - and CF(0) - the membrane proton channel. CF(1) has five subunits: alpha(3), beta(3), gamma(1), delta(1), epsilon(1). CF(0) has three main subunits: a, b and c.

The protein localises to the cell inner membrane. Produces ATP from ADP in the presence of a proton gradient across the membrane. The gamma chain is believed to be important in regulating ATPase activity and the flow of protons through the CF(0) complex. The protein is ATP synthase gamma chain of Leptothrix cholodnii (strain ATCC 51168 / LMG 8142 / SP-6) (Leptothrix discophora (strain SP-6)).